The following is a 263-amino-acid chain: Neurogenin-2 (263 aa).

Residues 20–76 (LGSASPASATLTPMSSSADEEEDEELRRPGSARGQRGAEAEQGVQGSPASGAGGCRP) form a disordered region. The span at 24–36 (SPASATLTPMSSS) shows a compositional bias: polar residues. A bHLH domain is found at 112–164 (TRRLKANNRERNRMHNLNAALDALREVLPTFPEDAKLTKIETLRFAHNYIWAL). A compositionally biased stretch (low complexity) spans 197–231 (LGASGDSPSPPSSWSCTNSPASSSNSTSPYSCTLS). The segment at 197-253 (LGASGDSPSPPSSWSCTNSPASSSNSTSPYSCTLSPASPGSDVDYWQPPPPEKHRYA) is disordered.

As to quaternary structure, efficient DNA binding requires dimerization with another bHLH protein.

It is found in the nucleus. Its function is as follows. Transcriptional regulator. Involved in neuronal differentiation. Activates transcription by binding to the E box (5'-CANNTG-3'). The protein is Neurogenin-2 (Neurog2) of Mus musculus (Mouse).